The chain runs to 202 residues: Small ribosomal subunit protein uS4 (202 aa).

The disordered stretch occupies residues 22–48 (TGKELARRPYAPGDHGQGRRGKLSEYG). One can recognise an S4 RNA-binding domain in the interval 93–154 (RRLDNMVYRL…KSKKLAVITG (62 aa)).

Belongs to the universal ribosomal protein uS4 family. In terms of assembly, part of the 30S ribosomal subunit. Contacts protein S5. The interaction surface between S4 and S5 is involved in control of translational fidelity.

Functionally, one of the primary rRNA binding proteins, it binds directly to 16S rRNA where it nucleates assembly of the body of the 30S subunit. Its function is as follows. With S5 and S12 plays an important role in translational accuracy. The polypeptide is Small ribosomal subunit protein uS4 (Lactiplantibacillus plantarum (strain ATCC BAA-793 / NCIMB 8826 / WCFS1) (Lactobacillus plantarum)).